A 381-amino-acid chain; its full sequence is Erythronate-4-phosphate dehydrogenase (381 aa).

Substrate is bound by residues S45 and T66. NAD(+) contacts are provided by residues D146, T174, 205-207, and D231; that span reads ASR. R207 is a catalytic residue. Residue E236 is part of the active site. Catalysis depends on H253, which acts as the Proton donor. Position 256 (G256) interacts with NAD(+). Position 257 (Y257) interacts with substrate.

It belongs to the D-isomer specific 2-hydroxyacid dehydrogenase family. PdxB subfamily. As to quaternary structure, homodimer.

Its subcellular location is the cytoplasm. It carries out the reaction 4-phospho-D-erythronate + NAD(+) = (R)-3-hydroxy-2-oxo-4-phosphooxybutanoate + NADH + H(+). Its pathway is cofactor biosynthesis; pyridoxine 5'-phosphate biosynthesis; pyridoxine 5'-phosphate from D-erythrose 4-phosphate: step 2/5. Functionally, catalyzes the oxidation of erythronate-4-phosphate to 3-hydroxy-2-oxo-4-phosphonooxybutanoate. The polypeptide is Erythronate-4-phosphate dehydrogenase (Stutzerimonas stutzeri (strain A1501) (Pseudomonas stutzeri)).